The chain runs to 695 residues: Solute carrier family 53 member 1 (695 aa).

Over 1–228 (MKFAEHLSAH…RVPPLGAAQP (228 aa)) the chain is Cytoplasmic. The 223-residue stretch at 2–224 (KFAEHLSAHI…MKRLRVPPLG (223 aa)) folds into the SPX domain. The important for inositol polyphosphate binding stretch occupies residues 158–165 (KILKKHDK). A helical membrane pass occupies residues 229–259 (APAWTTFRVGLFCGIFIVLNITLVFAAVFKL). Over 260–264 (ETDRT) the chain is Extracellular. Residues 265–296 (VWPLIRIYRGGFLLIEFLFLLGINTYGWRQAG) form a helical membrane-spanning segment. The Cytoplasmic portion of the chain corresponds to 297 to 309 (VNHVLIFELNPRN). Residues 310-337 (NLSHQHLFEIAGFLGILWCLSLLACFFA) traverse the membrane as a helical segment. The Extracellular portion of the chain corresponds to 338–343 (PISIIP). A helical membrane pass occupies residues 344–365 (IYVYPLALYGFMVFFLINPTKT). Residues 366-383 (FYYKSRFWLLKLLFRVFT) constitute an intramembrane region (helical). Residues 384-388 (APFHK) are Cytoplasmic-facing. A discontinuously helical transmembrane segment spans residues 389-422 (VGFADFWLADQLNSLSVILMDLEYMICFYSFELK). 2 residues coordinate phosphate: aspartate 398 and asparagine 401. Residues 423–429 (WDESKGL) lie on the Extracellular side of the membrane. The discontinuously helical transmembrane segment at 430–471 (LPNDPQEPEFCHKYSYGVRAIVQCIPAWLRFIQCLRRYRDTR) threads the bilayer. The 204-residue stretch at 439–642 (FCHKYSYGVR…LNADDQTLLE (204 aa)) folds into the EXS domain. Position 472 (arginine 472) is a topological domain, cytoplasmic. The helical transmembrane segment at 473–503 (AFPHLVNAGKYSTTFFTVTFAALYSTHEEQN) threads the bilayer. Phosphate is bound by residues lysine 482 and tyrosine 483. Topologically, residues 504 to 506 (HSD) are extracellular. Residues 507 to 534 (TVVFFYLWVFFCIISSCYTLIWDLKMDW) form a helical membrane-spanning segment. Residues 535–553 (GLFDKNAGENTFLREEIVY) lie on the Cytoplasmic side of the membrane. Residues 554 to 584 (PQKAYYYCAIIEDVILRFAWTIQISITATFK) form a discontinuously helical membrane-spanning segment. Arginine 570 lines the phosphate pocket. The Extracellular segment spans residues 585–586 (PH). A helical transmembrane segment spans residues 587-625 (VGNIIATVFAPLEVFRRFVWNFFRLENEHLNNCGEFRAV). Residues arginine 602 and arginine 603 each contribute to the phosphate site. Over 626–695 (RDISVAPLNA…IEDTDDEANT (70 aa)) the chain is Cytoplasmic. At serine 667 the chain carries Phosphoserine. Residues 671–695 (PRLASQSKARDTKVLIEDTDDEANT) are disordered. Residue threonine 689 is modified to Phosphothreonine.

It belongs to the SYG1 (TC 2.A.94) family. As to quaternary structure, homodimer. As to expression, expressed in pancreatic islets.

It is found in the cell membrane. It catalyses the reaction phosphate(in) = phosphate(out). Inorganic ion transporter that mediates phosphate ion export across plasma membrane. Plays a major role in phosphate homeostasis, preventing intracellular phosphate accumulation and possible calcium phosphate precipitation, ultimately preserving calcium signaling. Binds inositol hexakisphosphate (Ins6P) and similar inositol polyphosphates, such as 5-diphospho-inositol pentakisphosphate (5-InsP7), which are important intracellular signaling molecules involved in regulation of phosphate flux. Its function is as follows. (Microbial infection) Receptor for xenotropic and polytropic murine leukemia (X- and P-MLV) retroviruses. Confers susceptibility to X- or P-MLV infection in vitro. The polypeptide is Solute carrier family 53 member 1 (Mus musculus (Mouse)).